Consider the following 94-residue polypeptide: Protein S100-A1 (94 aa).

2 consecutive EF-hand domains span residues 13 to 48 and 50 to 85; these read INVF…FLDV and KDAD…LTVA. Positions 28, 33, 63, 65, 67, 69, and 74 each coordinate Ca(2+). S-nitrosocysteine is present on cysteine 86.

This sequence belongs to the S-100 family. As to quaternary structure, dimer of either two alpha chains, or two beta chains, or one alpha and one beta chain. Also forms heterodimers with S100P. Interacts with AGER. Interacts with CAPZA1. Interacts with FKBP4. Interacts with RYR1 and RYR2. Interacts with CACYBP in a calcium-dependent manner. Interacts with PPP5C (via TPR repeats); the interaction is calcium-dependent and modulates PPP5C activity. Interacts with ATP2A2 and PLN in a Ca(2+)-dependent manner. Interacts with mitochondrial F1-ATPase subunits ATP5F1A and ATP5F1B; these interactions increase F1-ATPase activity. Post-translationally, glutathionylated; glutathionylation increases affinity to calcium about 10-fold. As to expression, although predominant among the water-soluble brain proteins, S100 is also found in a variety of other tissues.

Its subcellular location is the cytoplasm. The protein resides in the sarcoplasmic reticulum. It localises to the mitochondrion. Small calcium binding protein that plays important roles in several biological processes such as Ca(2+) homeostasis, chondrocyte biology and cardiomyocyte regulation. In response to an increase in intracellular Ca(2+) levels, binds calcium which triggers conformational changes. These changes allow interactions with specific target proteins and modulate their activity. Regulates a network in cardiomyocytes controlling sarcoplasmic reticulum Ca(2+) cycling and mitochondrial function through interaction with the ryanodine receptors RYR1 and RYR2, sarcoplasmic reticulum Ca(2+)-ATPase/ATP2A2 and mitochondrial F1-ATPase. Facilitates diastolic Ca(2+) dissociation and myofilament mechanics in order to improve relaxation during diastole. The chain is Protein S100-A1 (S100a1) from Rattus norvegicus (Rat).